Consider the following 426-residue polypeptide: Glucose-6-phosphate isomerase (426 aa).

Catalysis depends on glutamate 276, which acts as the Proton donor. Residues histidine 297 and lysine 413 contribute to the active site.

This sequence belongs to the GPI family.

The protein resides in the cytoplasm. It carries out the reaction alpha-D-glucose 6-phosphate = beta-D-fructose 6-phosphate. It functions in the pathway carbohydrate biosynthesis; gluconeogenesis. It participates in carbohydrate degradation; glycolysis; D-glyceraldehyde 3-phosphate and glycerone phosphate from D-glucose: step 2/4. In terms of biological role, catalyzes the reversible isomerization of glucose-6-phosphate to fructose-6-phosphate. This Mesoplasma florum (strain ATCC 33453 / NBRC 100688 / NCTC 11704 / L1) (Acholeplasma florum) protein is Glucose-6-phosphate isomerase.